Reading from the N-terminus, the 142-residue chain is MDCIKFTVYGEPVAQGRPRGSIRNGKVHMRDPAKSKYFKQYVALVASQHRPETIITGPVSMDVKVYRPMPKSVSNSKKKKEKAEKGLLRPTTKPDVDNYVKGVKDALNHLIYKDDSQVVDLKVSKFYSEEPRVEVMIREVSA.

The disordered stretch occupies residues 70 to 94 (PKSVSNSKKKKEKAEKGLLRPTTKP). The span at 81–94 (EKAEKGLLRPTTKP) shows a compositional bias: basic and acidic residues.

This is an uncharacterized protein from Bacillus subtilis (strain 168).